The sequence spans 172 residues: NAD(P)H-quinone oxidoreductase subunit J (172 aa).

The protein belongs to the complex I 30 kDa subunit family. In terms of assembly, NDH-1 can be composed of about 15 different subunits; different subcomplexes with different compositions have been identified which probably have different functions.

Its subcellular location is the cellular thylakoid membrane. It carries out the reaction a plastoquinone + NADH + (n+1) H(+)(in) = a plastoquinol + NAD(+) + n H(+)(out). The enzyme catalyses a plastoquinone + NADPH + (n+1) H(+)(in) = a plastoquinol + NADP(+) + n H(+)(out). Its function is as follows. NDH-1 shuttles electrons from an unknown electron donor, via FMN and iron-sulfur (Fe-S) centers, to quinones in the respiratory and/or the photosynthetic chain. The immediate electron acceptor for the enzyme in this species is believed to be plastoquinone. Couples the redox reaction to proton translocation, and thus conserves the redox energy in a proton gradient. Cyanobacterial NDH-1 also plays a role in inorganic carbon-concentration. The sequence is that of NAD(P)H-quinone oxidoreductase subunit J from Synechococcus elongatus (strain ATCC 33912 / PCC 7942 / FACHB-805) (Anacystis nidulans R2).